A 233-amino-acid polypeptide reads, in one-letter code: Ribose-5-phosphate isomerase A (233 aa).

Residues 31–34 (SGST), 87–90 (DGAD), and 100–103 (KGGG) contribute to the substrate site. Residue Glu-109 is the Proton acceptor of the active site. Lys-127 provides a ligand contact to substrate.

The protein belongs to the ribose 5-phosphate isomerase family. Homodimer.

It carries out the reaction aldehydo-D-ribose 5-phosphate = D-ribulose 5-phosphate. The protein operates within carbohydrate degradation; pentose phosphate pathway; D-ribose 5-phosphate from D-ribulose 5-phosphate (non-oxidative stage): step 1/1. Functionally, catalyzes the reversible conversion of ribose-5-phosphate to ribulose 5-phosphate. This chain is Ribose-5-phosphate isomerase A, found in Chlamydia felis (strain Fe/C-56) (Chlamydophila felis).